Here is a 201-residue protein sequence, read N- to C-terminus: Glycerol-3-phosphate acyltransferase (201 aa).

6 consecutive transmembrane segments (helical) span residues Thr3 to Ser23, Lys51 to Val71, Val85 to Val105, Val116 to Ala136, Tyr137 to Tyr157, and Gly158 to Val178.

Belongs to the PlsY family. As to quaternary structure, probably interacts with PlsX.

It localises to the cell inner membrane. It carries out the reaction an acyl phosphate + sn-glycerol 3-phosphate = a 1-acyl-sn-glycero-3-phosphate + phosphate. The protein operates within lipid metabolism; phospholipid metabolism. Functionally, catalyzes the transfer of an acyl group from acyl-phosphate (acyl-PO(4)) to glycerol-3-phosphate (G3P) to form lysophosphatidic acid (LPA). This enzyme utilizes acyl-phosphate as fatty acyl donor, but not acyl-CoA or acyl-ACP. In Janthinobacterium sp. (strain Marseille) (Minibacterium massiliensis), this protein is Glycerol-3-phosphate acyltransferase.